The primary structure comprises 445 residues: RNA pseudouridine synthase 2, chloroplastic (445 aa).

The N-terminal 44 residues, 1-44 (MATTAAASPPAIATALSALLRRQRRRSSRCVGASHARCLAADAN), are a transit peptide targeting the chloroplast. The tract at residues 47–66 (AVAPSRRGGHGGTRLEEAVP) is disordered. In terms of domain architecture, S4 RNA-binding spans 72–147 (SRIDAWISAR…IPLDIVYEDD (76 aa)). Residue Asp235 is part of the active site.

It belongs to the pseudouridine synthase RluA family.

The protein resides in the plastid. It localises to the chloroplast. It carries out the reaction a uridine in RNA = a pseudouridine in RNA. The chain is RNA pseudouridine synthase 2, chloroplastic from Oryza sativa subsp. japonica (Rice).